A 134-amino-acid polypeptide reads, in one-letter code: Large-conductance mechanosensitive channel (134 aa).

The next 2 helical transmembrane spans lie at 15–35 and 80–100; these read IDLA…QSVV and GNFI…FLAV.

This sequence belongs to the MscL family. Homopentamer.

Its subcellular location is the cell inner membrane. Channel that opens in response to stretch forces in the membrane lipid bilayer. May participate in the regulation of osmotic pressure changes within the cell. In Methylocella silvestris (strain DSM 15510 / CIP 108128 / LMG 27833 / NCIMB 13906 / BL2), this protein is Large-conductance mechanosensitive channel.